A 468-amino-acid chain; its full sequence is Trehalose-2-sulfate acyltransferase PapA2 (468 aa).

The protein belongs to the PapA acyltransferase family.

It carries out the reaction 2-O-sulfo-alpha,alpha-trehalose + hexadecanoyl-CoA = 2-O-sulfo-2'-O-hexadecanoyl-alpha,alpha-trehalose + CoA. Its function is as follows. Required for the biosynthesis of sulfolipid-1 (SL-1), a major mycobacterial cell wall lipid. Catalyzes the acylation of trehalose-2-sulfate by adding the palmitoyl group at the 2'-position to yield the intermediate trehalose-2-sulfate-2'-palmitate (SL659). This chain is Trehalose-2-sulfate acyltransferase PapA2 (papA2), found in Mycobacterium bovis (strain ATCC BAA-935 / AF2122/97).